A 1188-amino-acid chain; its full sequence is DNA-directed RNA polymerase subunit beta (1188 aa).

The protein belongs to the RNA polymerase beta chain family. In terms of assembly, the RNAP catalytic core consists of 2 alpha, 1 beta, 1 beta' and 1 omega subunit. When a sigma factor is associated with the core the holoenzyme is formed, which can initiate transcription.

The enzyme catalyses RNA(n) + a ribonucleoside 5'-triphosphate = RNA(n+1) + diphosphate. Its function is as follows. DNA-dependent RNA polymerase catalyzes the transcription of DNA into RNA using the four ribonucleoside triphosphates as substrates. The protein is DNA-directed RNA polymerase subunit beta of Streptococcus pyogenes serotype M18 (strain MGAS8232).